The following is a 153-amino-acid chain: Glucose-6-phosphate 1-dehydrogenase (153 aa).

NADP(+) is bound by residues Arg21 and Lys120. Lys120 is a D-glucose 6-phosphate binding site.

This sequence belongs to the glucose-6-phosphate dehydrogenase family.

It localises to the cytoplasm. The protein resides in the cytosol. The enzyme catalyses D-glucose 6-phosphate + NADP(+) = 6-phospho-D-glucono-1,5-lactone + NADPH + H(+). The protein operates within carbohydrate degradation; pentose phosphate pathway; D-ribulose 5-phosphate from D-glucose 6-phosphate (oxidative stage): step 1/3. Its function is as follows. Cytosolic glucose-6-phosphate dehydrogenase that catalyzes the first and rate-limiting step of the oxidative branch within the pentose phosphate pathway/shunt, an alternative route to glycolysis for the dissimilation of carbohydrates and a major source of reducing power and metabolic intermediates for fatty acid and nucleic acid biosynthetic processes. In Sarcophaga bullata (Grey flesh fly), this protein is Glucose-6-phosphate 1-dehydrogenase (ZW).